Here is a 468-residue protein sequence, read N- to C-terminus: Chromosomal replication initiator protein DnaA (468 aa).

Positions 1-84 are domain I, interacts with DnaA modulators; the sequence is MSSSLWLQCL…RFEVGSKPIS (84 aa). A domain II region spans residues 84–131; sequence SAPPRPQRTAADVAAATSAPAQMQARQSLHKPWESRGPEPVDDLNHRS. Positions 112–132 are disordered; sequence LHKPWESRGPEPVDDLNHRSN. Positions 114–129 are enriched in basic and acidic residues; the sequence is KPWESRGPEPVDDLNH. The interval 132–348 is domain III, AAA+ region; the sequence is NVNPKHKFTN…GALNRVVANA (217 aa). Glycine 176, glycine 178, lysine 179, and threonine 180 together coordinate ATP. Residues 349–468 are domain IV, binds dsDNA; it reads NFTGRAITID…YSNLIRTLSS (120 aa).

This sequence belongs to the DnaA family. In terms of assembly, oligomerizes as a right-handed, spiral filament on DNA at oriC.

The protein localises to the cytoplasm. Its function is as follows. Plays an essential role in the initiation and regulation of chromosomal replication. ATP-DnaA binds to the origin of replication (oriC) to initiate formation of the DNA replication initiation complex once per cell cycle. Binds the DnaA box (a 9 base pair repeat at the origin) and separates the double-stranded (ds)DNA. Forms a right-handed helical filament on oriC DNA; dsDNA binds to the exterior of the filament while single-stranded (ss)DNA is stabiized in the filament's interior. The ATP-DnaA-oriC complex binds and stabilizes one strand of the AT-rich DNA unwinding element (DUE), permitting loading of DNA polymerase. After initiation quickly degrades to an ADP-DnaA complex that is not apt for DNA replication. Binds acidic phospholipids. The protein is Chromosomal replication initiator protein DnaA of Aliivibrio salmonicida (strain LFI1238) (Vibrio salmonicida (strain LFI1238)).